Here is a 405-residue protein sequence, read N- to C-terminus: Phosphoglycerate kinase (405 aa).

Residues 24–26 (DFN), R40, 63–66 (HLGR), R122, and R162 contribute to the substrate site. ATP is bound by residues K213, E332, and 361 to 364 (GGDS).

The protein belongs to the phosphoglycerate kinase family. Monomer.

The protein resides in the cytoplasm. It catalyses the reaction (2R)-3-phosphoglycerate + ATP = (2R)-3-phospho-glyceroyl phosphate + ADP. Its pathway is carbohydrate degradation; glycolysis; pyruvate from D-glyceraldehyde 3-phosphate: step 2/5. In Corynebacterium diphtheriae (strain ATCC 700971 / NCTC 13129 / Biotype gravis), this protein is Phosphoglycerate kinase.